A 99-amino-acid chain; its full sequence is Aspartyl/glutamyl-tRNA(Asn/Gln) amidotransferase subunit C (99 aa).

Belongs to the GatC family. In terms of assembly, heterotrimer of A, B and C subunits.

The enzyme catalyses L-glutamyl-tRNA(Gln) + L-glutamine + ATP + H2O = L-glutaminyl-tRNA(Gln) + L-glutamate + ADP + phosphate + H(+). It catalyses the reaction L-aspartyl-tRNA(Asn) + L-glutamine + ATP + H2O = L-asparaginyl-tRNA(Asn) + L-glutamate + ADP + phosphate + 2 H(+). Allows the formation of correctly charged Asn-tRNA(Asn) or Gln-tRNA(Gln) through the transamidation of misacylated Asp-tRNA(Asn) or Glu-tRNA(Gln) in organisms which lack either or both of asparaginyl-tRNA or glutaminyl-tRNA synthetases. The reaction takes place in the presence of glutamine and ATP through an activated phospho-Asp-tRNA(Asn) or phospho-Glu-tRNA(Gln). This is Aspartyl/glutamyl-tRNA(Asn/Gln) amidotransferase subunit C from Burkholderia cenocepacia (strain ATCC BAA-245 / DSM 16553 / LMG 16656 / NCTC 13227 / J2315 / CF5610) (Burkholderia cepacia (strain J2315)).